The primary structure comprises 1217 residues: ATP-dependent helicase/nuclease subunit A (1217 aa).

A UvrD-like helicase ATP-binding domain is found at Val-10 to Arg-475. Ala-31–Thr-38 contributes to the ATP binding site. Residues Asp-491–Gly-786 form the UvrD-like helicase C-terminal domain.

This sequence belongs to the helicase family. AddA subfamily. In terms of assembly, heterodimer of AddA and AddB/RexB. Mg(2+) is required as a cofactor.

It catalyses the reaction Couples ATP hydrolysis with the unwinding of duplex DNA by translocating in the 3'-5' direction.. It carries out the reaction ATP + H2O = ADP + phosphate + H(+). In terms of biological role, the heterodimer acts as both an ATP-dependent DNA helicase and an ATP-dependent, dual-direction single-stranded exonuclease. Recognizes the chi site generating a DNA molecule suitable for the initiation of homologous recombination. The AddA nuclease domain is required for chi fragment generation; this subunit has the helicase and 3' -&gt; 5' nuclease activities. The protein is ATP-dependent helicase/nuclease subunit A of Staphylococcus aureus (strain bovine RF122 / ET3-1).